The following is a 1670-amino-acid chain: Collagen alpha-3(IV) chain (1670 aa).

An N-terminal signal peptide occupies residues methionine 1–serine 28. Positions lysine 29–aspartate 42 are 7S domain. The interval glycine 43–proline 1438 is triple-helical region. 3 disordered regions span residues glycine 49–lysine 78, leucine 167–lysine 469, and glycine 502–threonine 1442. A compositionally biased stretch (pro residues) spans proline 176 to proline 200. The segment covering phenylalanine 202–arginine 212 has biased composition (low complexity). Over residues histidine 217 to valine 231 the composition is skewed to basic and acidic residues. Residues glycine 242–proline 251 are compositionally biased toward low complexity. Residue asparagine 253 is glycosylated (N-linked (GlcNAc...) asparagine). Residues asparagine 253 to alanine 266 show a composition bias toward basic and acidic residues. Residues serine 382–proline 394 are compositionally biased toward low complexity. Positions serine 402 to lysine 411 are enriched in basic and acidic residues. The segment covering glycine 415–leucine 428 has biased composition (low complexity). Pro residues-rich tracts occupy residues proline 429 to proline 438, proline 598 to tyrosine 618, and valine 654 to isoleucine 675. A Cell attachment site motif is present at residues arginine 791–aspartate 793. Residues isoleucine 900–proline 909 are compositionally biased toward pro residues. The segment covering valine 974–proline 987 has biased composition (low complexity). The Cell attachment site signature appears at arginine 996–aspartate 998. Low complexity-rich tracts occupy residues isoleucine 1013–serine 1025, leucine 1094–serine 1105, and histidine 1118–proline 1133. Over residues isoleucine 1135 to proline 1148 the composition is skewed to pro residues. Residues arginine 1154–aspartate 1156 carry the Cell attachment site motif. 2 stretches are compositionally biased toward low complexity: residues proline 1230–proline 1250 and proline 1290–threonine 1299. Positions arginine 1306–aspartate 1308 match the Cell attachment site motif. Residues proline 1332–proline 1341 show a composition bias toward pro residues. 2 consecutive short sequence motifs (cell attachment site) follow at residues arginine 1345 to aspartate 1347 and arginine 1432 to aspartate 1434. Positions glycine 1427–arginine 1444 are epitope recognized by Goodpasture antibodies. The Collagen IV NC1 domain maps to glycine 1445–arginine 1669. 6 cysteine pairs are disulfide-bonded: cysteine 1460/cysteine 1551, cysteine 1493/cysteine 1548, cysteine 1505/cysteine 1511, cysteine 1570/cysteine 1665, cysteine 1604/cysteine 1662, and cysteine 1616/cysteine 1622. A required for the anti-angiogenic activity of tumstatin region spans residues asparagine 1479–alanine 1557. Methionine 1533 participates in a covalent cross-link: S-Lysyl-methionine sulfilimine (Met-Lys) (interchain with K-1651). Positions alanine 1610–serine 1628 are required for the anti-tumor cell activity of tumstatin. Residue lysine 1651 forms an S-Lysyl-methionine sulfilimine (Lys-Met) (interchain with M-1533) linkage.

This sequence belongs to the type IV collagen family. There are six type IV collagen isoforms, alpha 1(IV)-alpha 6(IV), each of which can form a triple helix structure with 2 other chains to generate type IV collagen network. The alpha 3(IV) chain forms a triple helical protomer with alpha 4(IV) and alpha 5(IV); this triple helical structure dimerizes through NC1-NC1 domain interactions such that the alpha 3(IV), alpha 4(IV) and alpha 5(IV) chains of one protomer connect with the alpha 5(IV), alpha 4(IV) and alpha 3(IV) chains of the opposite promoter, respectively. Interacts with ITGB3. Associates with LAMB2 at the neuromuscular junction and in GBM. Post-translationally, prolines at the third position of the tripeptide repeating unit (G-X-Y) are hydroxylated in some or all of the chains. In terms of processing, isoform 2 contains an additional N-linked glycosylation site. Type IV collagens contain numerous cysteine residues which are involved in inter- and intramolecular disulfide bonding. 12 of these, located in the NC1 domain, are conserved in all known type IV collagens. Post-translationally, the trimeric structure of the NC1 domains is stabilized by covalent bonds between Lys and Met residues. In terms of processing, phosphorylated. Thought to be phosphorylated by CERT, but CERT does not have kinase activity. As to expression, alpha 3 and alpha 4 type IV collagens are colocalized and present in kidney, eye, basement membranes of lens capsule, cochlea, lung, skeletal muscle, aorta, synaptic fibers, fetal kidney and fetal lung. PubMed:8083201 reports similar levels of expression of alpha 3 and alpha 4 type IV collagens in kidney, but PubMed:7523402 reports that in kidney levels of alpha 3 type IV collagen are significantly lower than those of alpha 4 type IV collagen. According to PubMed:8083201, alpha 3 type IV collagen is not detected in heart, brain, placenta, liver, pancreas, extrasynaptic muscle fibers, endoneurial and perineurial nerves, fetal brain, fetal heart and fetal liver. According to PubMed:7523402, alpha 3 type IV collagen is strongly expressed in pancreas, neuroretina and calvaria and not expressed in adrenal, ileum and skin. Isoform 1 and isoform 3 are strongly expressed in kidney, lung, suprarenal capsule, muscle and spleen, in each of these tissues isoform 1 is more abundant than isoform 3. Isoform 1 and isoform 3 are expressed at low levels in artery, fat, pericardium and peripherical nerve, but not in placenta, mesangium, skin, pleura and cultured umbilical endothelial cells.

It localises to the secreted. The protein resides in the extracellular space. The protein localises to the extracellular matrix. Its subcellular location is the basement membrane. Type IV collagen is the major structural component of glomerular basement membranes (GBM), forming a 'chicken-wire' meshwork together with laminins, proteoglycans and entactin/nidogen. Its function is as follows. Tumstatin, a cleavage fragment corresponding to the collagen alpha 3(IV) NC1 domain, possesses both anti-angiogenic and anti-tumor cell activity; these two anti-tumor properties may be regulated via RGD-independent ITGB3-mediated mechanisms. The polypeptide is Collagen alpha-3(IV) chain (COL4A3) (Homo sapiens (Human)).